The chain runs to 468 residues: Glutamine synthetase (468 aa).

Positions 14–98 (HDVKYVDLRF…ILCDVYEPST (85 aa)) constitute a GS beta-grasp domain. The GS catalytic domain maps to 106–468 (PRGIAKAAEK…PIEYKMYYSV (363 aa)). Mg(2+) contacts are provided by Glu131 and Glu133. Glu209 contacts ATP. Mg(2+) is bound by residues Glu214 and Glu221. L-glutamate-binding positions include 265–266 (NG) and Gly266. His270 provides a ligand contact to Mg(2+). ATP is bound by residues 272–274 (HQS) and Ser274. L-glutamate-binding residues include Arg322, Glu328, and Arg340. ATP is bound by residues Arg340, Arg345, and Lys353. Residue Glu358 participates in Mg(2+) binding. Arg360 contributes to the L-glutamate binding site. Tyr398 carries the post-translational modification O-AMP-tyrosine.

It belongs to the glutamine synthetase family. Oligomer of 12 subunits arranged in the form of two hexameric ring. Mg(2+) serves as cofactor.

The protein localises to the cytoplasm. It catalyses the reaction L-glutamate + NH4(+) + ATP = L-glutamine + ADP + phosphate + H(+). The activity of this enzyme could be controlled by adenylation under conditions of abundant glutamine. Catalyzes the ATP-dependent biosynthesis of glutamine from glutamate and ammonia. The chain is Glutamine synthetase from Azospirillum brasilense.